The primary structure comprises 1029 residues: Collagen, type I, alpha 1b (1029 aa).

Residues 1 to 990 (QMSYVDHSKS…KAPDPFRGGH (990 aa)) form a disordered region. The segment covering 13-33 (PPQPGPMGPMGPRGPPGPPGS) has biased composition (pro residues). Residues 34-57 (SGPQGFTGPPGEPGEPGASGAMGS) show a composition bias toward low complexity. A compositionally biased stretch (basic and acidic residues) spans 67 to 81 (NGDDGEPGKPGRPGE). Composition is skewed to low complexity over residues 82–91 (RGAAGPQGAR), 120–129 (VPGVMGARGR), and 136–147 (SGARGNDGNTGP). The segment covering 163–182 (PGGAGAKGETGPAGGRGNEG) has biased composition (gly residues). 3 stretches are compositionally biased toward low complexity: residues 199-223 (AGPAGSPGTDGAPGAKGSPGAAGLA), 233-267 (AQGAVGAPGPKGNNGDPGASGPKGEPGAKGEPGPA), and 299-309 (ERGAPGARGFP). Residues 310–322 (GADGGAGGKGAPG) show a composition bias toward gly residues. 2 stretches are compositionally biased toward low complexity: residues 323 to 351 (ERGAPGALGAQGATGESGSPGAPGAPGSK) and 429 to 465 (VGAPGPSGVAGPAGEKGEQGPAGPPGFQGLPGPQGAT). A compositionally biased stretch (gly residues) spans 466 to 477 (GETGKGLGGPTG). The span at 478 to 497 (PRGAPGPAGNDGAKGEPGAA) shows a compositional bias: low complexity. 2 stretches are compositionally biased toward gly residues: residues 498–507 (GAPGGLGAPG) and 531–540 (GGKGGDGAPG). Composition is skewed to low complexity over residues 571–580 (VAGPTGPRGA) and 593–620 (AGFAGPPGADGQPGAKGETGDSGPKGDA). 2 stretches are compositionally biased toward gly residues: residues 621–630 (GAPGPGGPVG) and 645–654 (GARGGAGPPG). 5 stretches are compositionally biased toward low complexity: residues 655 to 665 (ATGFPGPAGRV), 694 to 722 (ETGAAGRPGEAGAAGAPGPSGEKGSPGXD), 731 to 743 (PQGLAGQRGLPGQ), 830 to 839 (APGAVGPSGK), and 855 to 869 (SGPAGVRGPAGPAGA). Over residues 870 to 884 (KGDRGEAGEAGDRGG) the composition is skewed to basic and acidic residues. Positions 906 to 934 (PAGASGPAGPRGPAGSNGAPGKDGMNGLP) are enriched in low complexity. A compositionally biased stretch (pro residues) spans 952–967 (AGPPGPPGPAGPPGPP). The Fibrillar collagen NC1 domain maps to 999 to 1029 (TQKLPLLDLAPMDVGAPDQEFGVEVGPVCFL).

Belongs to the fibrillar collagen family.

It localises to the secreted. It is found in the extracellular space. The protein localises to the extracellular matrix. This Epinephelus aeneus (White grouper) protein is Collagen, type I, alpha 1b.